A 256-amino-acid polypeptide reads, in one-letter code: Major prion protein (256 aa).

The N-terminal stretch at 1–24 (MVKSHIGSWILVLFVAMWSDVGLC) is a signal peptide. The segment at 25–233 (KKRPKPGGGW…ESQAYYQRGA (209 aa)) is interaction with GRB2, ERI3 and SYN1. The tract at residues 28–110 (PKPGGGWNTG…QWNKPSKPKT (83 aa)) is disordered. 5 consecutive repeat copies span residues 54 to 62 (PQGGGGWGQ), 63 to 70 (PHGGGWGQ), 71 to 78 (PHGGGWGQ), 79 to 86 (PHGGGWGQ), and 87 to 95 (PHGGGGWGQ). A 5 X 8 AA tandem repeats of P-H-G-G-G-W-G-Q region spans residues 54 to 95 (PQGGGGWGQPHGGGWGQPHGGGWGQPHGGGWGQPHGGGGWGQ). A compositionally biased stretch (gly residues) spans 55-97 (QGGGGWGQPHGGGWGQPHGGGWGQPHGGGWGQPHGGGGWGQGG). 12 residues coordinate Cu(2+): His-64, Gly-65, Gly-66, His-72, Gly-73, Gly-74, His-80, Gly-81, Gly-82, His-88, Gly-90, and Gly-91. Residues Cys-182 and Cys-217 are joined by a disulfide bond. Residues Asn-184 and Asn-200 are each glycosylated (N-linked (GlcNAc...) (complex) asparagine). Ala-233 is lipidated: GPI-anchor amidated alanine. A propeptide spans 234–256 (SVILFSSPPVILLISFLIFLIVG) (removed in mature form).

This sequence belongs to the prion family. As to quaternary structure, monomer and homodimer. Has a tendency to aggregate into amyloid fibrils containing a cross-beta spine, formed by a steric zipper of superposed beta-strands. Soluble oligomers may represent an intermediate stage on the path to fibril formation. Copper binding may promote oligomerization. Interacts with GRB2, APP, ERI3/PRNPIP and SYN1. Mislocalized cytosolically exposed PrP interacts with MGRN1; this interaction alters MGRN1 subcellular location and causes lysosomal enlargement. Interacts with KIAA1191.

The protein localises to the cell membrane. It is found in the golgi apparatus. Functionally, its primary physiological function is unclear. Has cytoprotective activity against internal or environmental stresses. May play a role in neuronal development and synaptic plasticity. May be required for neuronal myelin sheath maintenance. May play a role in iron uptake and iron homeostasis. Soluble oligomers are toxic to cultured neuroblastoma cells and induce apoptosis (in vitro). Association with GPC1 (via its heparan sulfate chains) targets PRNP to lipid rafts. Also provides Cu(2+) or Zn(2+) for the ascorbate-mediated GPC1 deaminase degradation of its heparan sulfate side chains. The chain is Major prion protein (PRNP) from Ovis aries (Sheep).